The primary structure comprises 508 residues: Transcription termination factor MTERF4, chloroplastic (508 aa).

A chloroplast-targeting transit peptide spans 1–79; sequence MMKSLFLFSA…PSLLDMERGR (79 aa). Residues 28–49 show a composition bias toward low complexity; that stretch reads RLTASASTSASSPPRAGCSRGP. Disordered stretches follow at residues 28–69 and 475–508; these read RLTA…LYAR and FDTNTLSERVEDEVEDEDLDEDSDYDSTDDEFIE. The span at 484–508 shows a compositional bias: acidic residues; the sequence is VEDEVEDEDLDEDSDYDSTDDEFIE.

This sequence belongs to the mTERF family.

It is found in the plastid. The protein resides in the chloroplast stroma. Its function is as follows. Transcription termination factor required for processing and steady-state levels of plastid transcripts. Required for splicing of the chloroplastic group II intron. Required for the accumulation of 16S and 23S ribosomes. The polypeptide is Transcription termination factor MTERF4, chloroplastic (Oryza sativa subsp. japonica (Rice)).